A 614-amino-acid polypeptide reads, in one-letter code: MRLFAAATVALVLLLGQAAGEELAEERAGQAQGDAESTESSETTTDQAVSEPPITLVHVLNPGEREYLSPNLIGVQNIAMTFLPLSMNFVNIIDAFREITAGVRYEILLNALDTKAIQPAEADIVCRLVILEKPWLRTQWGDKHRELVTSNCTDPAVNSVAGDPAEKARLLNEKYVHRSRRSANDILGRHKPYDEEAAKAQLQKSLDKLTAGEGPHYKIVKVYSASRQVDSGILTRIDADLIDGSEEQHRCIVDIWTKVWVRKDEHEITFKCRNQPVVQARHTRSVEWAEKKTHKKHSHRFDKVDHLFYKFQVRFGRRYVSTAERQMRLRIFRQNLKTIEELNANEMGSAKYGITEFADMTSSEYKERTGLWQRDEAKATGGSAAVVPAYHGELPKEFDWRQKDAVTQVKNQGSCGSCWAFSVTGNIEGLYAVKTGELKEFSEQELLDCDTTDSACNGGLMDNAYKAIKDIGGLEYEAEYPYKAKKNQCHFNRTLSHVQVAGFVDLPKGNETAMQEWLLANGPISIGINANAMQFYRGGVSHPWKALCSKKNLDHGVLVVGYGVSDYPNFHKTLPYWIVKNSWGPRWGEQGYYRVYRGDNTCGVSEMATSAVLA.

The N-terminal stretch at 1-20 (MRLFAAATVALVLLLGQAAG) is a signal peptide. Residues 21-393 (EELAEERAGQ…AAVVPAYHGE (373 aa)) constitute a propeptide, activation peptide. A disordered region spans residues 25-50 (EERAGQAQGDAESTESSETTTDQAVS). The span at 29–45 (GQAQGDAESTESSETTT) shows a compositional bias: low complexity. Asparagine 151 carries N-linked (GlcNAc...) asparagine glycosylation. 2 cysteine pairs are disulfide-bonded: cysteine 415/cysteine 456 and cysteine 449/cysteine 489. Residue cysteine 418 is part of the active site. Residues asparagine 492 and asparagine 510 are each glycosylated (N-linked (GlcNAc...) asparagine). A disulfide bridge connects residues cysteine 548 and cysteine 602. Catalysis depends on residues histidine 555 and asparagine 581.

This sequence belongs to the peptidase C1 family.

It carries out the reaction The recombinant enzyme cleaves synthetic substrates with Phe and Leu (better than Val) in P2, with high specificity constant (kcat/Km) comparable to that of cathepsin L.. Functionally, may have a role in autophagic cell death. This is Cathepsin F from Drosophila melanogaster (Fruit fly).